The primary structure comprises 189 residues: Chitin synthase 2 (189 aa).

It belongs to the chitin synthase family. Class II subfamily.

It is found in the cell membrane. It carries out the reaction [(1-&gt;4)-N-acetyl-beta-D-glucosaminyl](n) + UDP-N-acetyl-alpha-D-glucosamine = [(1-&gt;4)-N-acetyl-beta-D-glucosaminyl](n+1) + UDP + H(+). Polymerizes chitin, a structural polymer of the cell wall and septum, by transferring the sugar moiety of UDP-GlcNAc to the non-reducing end of the growing chitin polymer. This Xylohypha bantiana protein is Chitin synthase 2 (CHS2).